Consider the following 147-residue polypeptide: uncharacterized protein (147 aa).

The disordered stretch occupies residues Val-110–Ala-133. Residues Pro-113–Lys-128 show a composition bias toward pro residues.

This is an uncharacterized protein from Ictalurid herpesvirus 1 (strain Auburn) (IcHV-1).